The primary structure comprises 80 residues: UPF0154 protein SZO_03240 (80 aa).

Residues A4–I24 traverse the membrane as a helical segment.

It belongs to the UPF0154 family.

The protein localises to the cell membrane. This chain is UPF0154 protein SZO_03240, found in Streptococcus equi subsp. zooepidemicus (strain H70).